Reading from the N-terminus, the 346-residue chain is Biotin synthase (346 aa).

The region spanning 38–256 is the Radical SAM core domain; that stretch reads QQVQVSTLLS…IAVARIMMPT (219 aa). [4Fe-4S] cluster contacts are provided by C53, C57, and C60. [2Fe-2S] cluster-binding residues include C97, C128, C188, and R260.

The protein belongs to the radical SAM superfamily. Biotin synthase family. As to quaternary structure, homodimer. Requires [4Fe-4S] cluster as cofactor. The cofactor is [2Fe-2S] cluster.

The enzyme catalyses (4R,5S)-dethiobiotin + (sulfur carrier)-SH + 2 reduced [2Fe-2S]-[ferredoxin] + 2 S-adenosyl-L-methionine = (sulfur carrier)-H + biotin + 2 5'-deoxyadenosine + 2 L-methionine + 2 oxidized [2Fe-2S]-[ferredoxin]. It functions in the pathway cofactor biosynthesis; biotin biosynthesis; biotin from 7,8-diaminononanoate: step 2/2. Catalyzes the conversion of dethiobiotin (DTB) to biotin by the insertion of a sulfur atom into dethiobiotin via a radical-based mechanism. The protein is Biotin synthase of Citrobacter koseri (strain ATCC BAA-895 / CDC 4225-83 / SGSC4696).